Consider the following 319-residue polypeptide: tRNA uridine(34) hydroxylase (319 aa).

The Rhodanese domain occupies 125-219; it reads LDENTVVIDA…YGKDPEVQGD (95 aa). Catalysis depends on Cys179, which acts as the Cysteine persulfide intermediate.

The protein belongs to the TrhO family.

It catalyses the reaction uridine(34) in tRNA + AH2 + O2 = 5-hydroxyuridine(34) in tRNA + A + H2O. Catalyzes oxygen-dependent 5-hydroxyuridine (ho5U) modification at position 34 in tRNAs. This Lactococcus lactis subsp. cremoris (strain MG1363) protein is tRNA uridine(34) hydroxylase.